A 609-amino-acid polypeptide reads, in one-letter code: Dihydroxy-acid dehydratase 1 (609 aa).

Residue Asp81 participates in Mg(2+) binding. Cys122 contributes to the [2Fe-2S] cluster binding site. Residues Asp123 and Lys124 each contribute to the Mg(2+) site. At Lys124 the chain carries N6-carboxylysine. Residue Cys195 coordinates [2Fe-2S] cluster. Glu491 lines the Mg(2+) pocket. The Proton acceptor role is filled by Ser517.

Belongs to the IlvD/Edd family. Homodimer. The cofactor is [2Fe-2S] cluster. Mg(2+) is required as a cofactor.

The enzyme catalyses (2R)-2,3-dihydroxy-3-methylbutanoate = 3-methyl-2-oxobutanoate + H2O. The catalysed reaction is (2R,3R)-2,3-dihydroxy-3-methylpentanoate = (S)-3-methyl-2-oxopentanoate + H2O. Its pathway is amino-acid biosynthesis; L-isoleucine biosynthesis; L-isoleucine from 2-oxobutanoate: step 3/4. It functions in the pathway amino-acid biosynthesis; L-valine biosynthesis; L-valine from pyruvate: step 3/4. Functions in the biosynthesis of branched-chain amino acids. Catalyzes the dehydration of (2R,3R)-2,3-dihydroxy-3-methylpentanoate (2,3-dihydroxy-3-methylvalerate) into 2-oxo-3-methylpentanoate (2-oxo-3-methylvalerate) and of (2R)-2,3-dihydroxy-3-methylbutanoate (2,3-dihydroxyisovalerate) into 2-oxo-3-methylbutanoate (2-oxoisovalerate), the penultimate precursor to L-isoleucine and L-valine, respectively. This is Dihydroxy-acid dehydratase 1 from Acinetobacter baylyi (strain ATCC 33305 / BD413 / ADP1).